Consider the following 459-residue polypeptide: Cysteine--tRNA ligase (459 aa).

Cysteine 28 provides a ligand contact to Zn(2+). Positions 30-40 (VTIYDLCHIGH) match the 'HIGH' region motif. Residues cysteine 209, histidine 234, and glutamate 238 each coordinate Zn(2+). Residues 266 to 270 (KMSKS) carry the 'KMSKS' region motif. Lysine 269 contacts ATP.

The protein belongs to the class-I aminoacyl-tRNA synthetase family. As to quaternary structure, monomer. Zn(2+) serves as cofactor.

Its subcellular location is the cytoplasm. The catalysed reaction is tRNA(Cys) + L-cysteine + ATP = L-cysteinyl-tRNA(Cys) + AMP + diphosphate. The sequence is that of Cysteine--tRNA ligase from Shewanella amazonensis (strain ATCC BAA-1098 / SB2B).